The chain runs to 285 residues: UPF0173 metal-dependent hydrolase Pnuc_1524 (285 aa).

The protein belongs to the UPF0173 family.

In Polynucleobacter asymbioticus (strain DSM 18221 / CIP 109841 / QLW-P1DMWA-1) (Polynucleobacter necessarius subsp. asymbioticus), this protein is UPF0173 metal-dependent hydrolase Pnuc_1524.